We begin with the raw amino-acid sequence, 201 residues long: Putative pseudouridine methyltransferase (201 aa).

S-adenosyl-L-methionine-binding residues include M132 and C186.

It belongs to the methyltransferase superfamily. TrmY family.

The protein resides in the cytoplasm. This chain is Putative pseudouridine methyltransferase, found in Vibrio cholerae serotype O1 (strain ATCC 39315 / El Tor Inaba N16961).